We begin with the raw amino-acid sequence, 164 residues long: MKNFASIKDEIQKIAESILKEYNLQIYEINNFFDFESDVLQILVEDITEPNKALDFDSIISSNEKLSDALENFPGLSEPYMLEVASAGIEKPIRSKDELVKAVNSYIHVELNQEKNTSSEIEGILLDFDVNKDTFRITYFLKGQKKKVDFKYEQVKFARYAVKF.

This sequence belongs to the RimP family.

It localises to the cytoplasm. In terms of biological role, required for maturation of 30S ribosomal subunits. In Mesoplasma florum (strain ATCC 33453 / NBRC 100688 / NCTC 11704 / L1) (Acholeplasma florum), this protein is Ribosome maturation factor RimP.